Here is a 157-residue protein sequence, read N- to C-terminus: Snaclec EMS16 subunit alpha (157 aa).

The first 23 residues, 1 to 23 (MGRFISVSFGLLVVFLSLSGTGA), serve as a signal peptide directing secretion. Disulfide bonds link cysteine 27–cysteine 38, cysteine 55–cysteine 152, and cysteine 127–cysteine 144. Residues 34-153 (YDQHCYLAIG…CEDLYPFVCK (120 aa)) form the C-type lectin domain.

This sequence belongs to the snaclec family. As to quaternary structure, heterodimer of subunits A and B; disulfide-linked. As to expression, expressed by the venom gland.

The protein resides in the secreted. Functionally, EMS16 is a potent and selective inhibitor of alpha-2/beta-1 (ITGA2/ITGB1) integrin and acts as a potent antagonist of platelet aggregation and cell migration. Binds specifically to the I domain of the alpha-2 subunit, in a metal ion-independent fashion. The sequence is that of Snaclec EMS16 subunit alpha from Echis multisquamatus (Central Asian sand viper).